We begin with the raw amino-acid sequence, 538 residues long: Interleukin-21 receptor (538 aa).

A signal peptide spans 1-19 (MPRGWAAPLLLLLLQGGWG). Disulfide bonds link Cys-20-Cys-109, Cys-25-Cys-35, and Cys-65-Cys-81. Over 20–232 (CPDLVCYTDY…FQTQSEELKE (213 aa)) the chain is Extracellular. Fibronectin type-III domains lie at 21 to 118 (PDLV…AESI) and 119 to 228 (KPAP…TQSE). Residues Asn-73, Asn-97, Asn-104, Asn-125, and Asn-135 are each glycosylated (N-linked (GlcNAc...) asparagine). Residue Trp-214 is glycosylated (C-linked (Man) tryptophan). Positions 214–218 (WSEWS) match the WSXWS motif motif. The helical transmembrane segment at 233–253 (GWNPHLLLLLLLVIVFIPAFW) threads the bilayer. The Cytoplasmic segment spans residues 254–538 (SLKTHPLWRL…PLSSPGPQAS (285 aa)). The Box 1 motif motif lies at 266–274 (KIWAVPSPE). Disordered stretches follow at residues 342-367 (ESDG…SEER) and 457-487 (EDWA…GLDM).

This sequence belongs to the type I cytokine receptor family. Type 4 subfamily. Heterodimer with the common gamma subunit. Associates with JAK1. In terms of processing, C-mannosylated at Trp-214 in the WSXWS motif, the sugar chain makes extensive hydrogen bonds with Asn-73 sugar, and bridges the two fibronectin domains transforming the V-shaped receptor into an A-frame. Selectively expressed in lymphoid tissues. Most highly expressed in thymus and spleen.

It is found in the membrane. Its function is as follows. This is a receptor for interleukin-21. The sequence is that of Interleukin-21 receptor (IL21R) from Homo sapiens (Human).